We begin with the raw amino-acid sequence, 272 residues long: Sulfate transporter CysZ (272 aa).

The next 4 membrane-spanning stretches (helical) occupy residues 29–49 (FVII…WLFI), 66–86 (WLSF…LLLF), 148–168 (IIAL…VPVL), and 219–239 (FVPV…TLMW).

Belongs to the CysZ family.

It is found in the cell inner membrane. High affinity, high specificity proton-dependent sulfate transporter, which mediates sulfate uptake. Provides the sulfur source for the cysteine synthesis pathway. The chain is Sulfate transporter CysZ from Haemophilus influenzae (strain 86-028NP).